The chain runs to 678 residues: Endopolyphosphatase (678 aa).

Residues 1–2 are Cytoplasmic-facing; that stretch reads MR. A helical; Signal-anchor for type II membrane protein transmembrane segment spans residues 3-23; sequence SPLLASLFALALSIASSEAAI. Residues 24–678 are Vacuolar-facing; it reads SSTEQVPLSG…ELMLVSTETD (655 aa). The segment at 70-109 is disordered; it reads YKTGSTFDSGCHRKPKKDGKSEGKKATENERGNEDLDDKE. The span at 87 to 103 shows a compositional bias: basic and acidic residues; sequence DGKSEGKKATENERGNE. 3 N-linked (GlcNAc...) asparagine glycosylation sites follow: N138, N369, and N447. Residues 504–547 are disordered; the sequence is KGSGGHRHDVPKGDCSLPSNEDKPHCTFKRKPRHYSKRSPSRTN. Residues 529 to 543 are compositionally biased toward basic residues; the sequence is CTFKRKPRHYSKRSP. 2 N-linked (GlcNAc...) asparagine glycosylation sites follow: N591 and N616.

Belongs to the endopolyphosphatase PPN1 family. A divalent metal cation serves as cofactor. Post-translationally, processing by proteases in the vacuole may be required for activation.

The protein resides in the vacuole membrane. It catalyses the reaction [phosphate](n+1) + n H2O = (n+1) phosphate + n H(+). Its function is as follows. Catalyzes the hydrolysis of inorganic polyphosphate (polyP) chains of many hundreds of phosphate residues into shorter lengths. This Cryptococcus neoformans var. neoformans serotype D (strain JEC21 / ATCC MYA-565) (Filobasidiella neoformans) protein is Endopolyphosphatase (PPN1).